Consider the following 1365-residue polypeptide: Glucosyltransferase-S (1365 aa).

Positions 1-36 form a signal peptide, or 37; that stretch reads MEKNLRYKLHKVKKQWVAIGVTTVTLSFLAGGQVVA. Polar residues-rich tracts occupy residues 80 to 89 and 127 to 146; these read DQTATSQVSP and RQSAADTSTDGKAVPQTSDQ. Disordered regions lie at residues 80-99 and 127-152; these read DQTATSQVSPATDGRVDNQV and RQSAADTSTDGKAVPQTSDQPGHLET. 2 Cell wall-binding repeats span residues 146-166 and 168-187; these read QPGHLETVDGKTYYVDANGQR and KNYSMVIDGKTYYFDGQTGE. Positions 200–1000 are catalytic; approximate; sequence QDNVPDSYQA…KPIDPSVKIT (801 aa). Cell wall-binding repeat units lie at residues 1052–1071, 1073–1092, 1093–1112, 1113–1133, 1136–1159, 1160–1179, 1234–1253, 1278–1298, 1299–1318, and 1343–1362; these read ANGFISKNGGIHYLDKNGQE, KNRFKEISGSWYYFDSDGKM, ATGKTKIGNDTYLFMPNGKQ, LKEGVWYDGKKAYYYDDNGRT, NKGFVEFRVDGQDKWRYFNGDGTI, AIGLVSLDNRTLYFDAYGYQ, LTGEQTIDGQKVFFQDNGVQ, GKGWYSTSDDNWVYVNESGQV, LTGLQTIDGQTVYFDDKGIQ, and RDRWKNVDGNWYYFNRNGLA.

The protein belongs to the glycosyl hydrolase 70 family.

It catalyses the reaction [(1-&gt;6)-alpha-D-glucosyl](n) + sucrose = [(1-&gt;6)-alpha-D-glucosyl](n+1) + D-fructose. With respect to regulation, glucan synthesis by GTF-S is independent of primer glucan unlike GTF-I. Its function is as follows. Production of extracellular glucans, that are thought to play a key role in the development of the dental plaque because of their ability to adhere to smooth surfaces and mediate the aggregation of bacterial cells and food debris. The chain is Glucosyltransferase-S (gtfS) from Streptococcus downei (Streptococcus sobrinus).